The primary structure comprises 1318 residues: DNA-directed RNA polymerase subunit beta' (1318 aa).

Positions 221, 295, 302, and 305 each coordinate Zn(2+).

The protein belongs to the RNA polymerase beta' chain family. RpoC2 subfamily. As to quaternary structure, in cyanobacteria the RNAP catalytic core is composed of 2 alpha, 1 beta, 1 beta', 1 gamma and 1 omega subunit. When a sigma factor is associated with the core the holoenzyme is formed, which can initiate transcription. Zn(2+) serves as cofactor.

It carries out the reaction RNA(n) + a ribonucleoside 5'-triphosphate = RNA(n+1) + diphosphate. Functionally, DNA-dependent RNA polymerase catalyzes the transcription of DNA into RNA using the four ribonucleoside triphosphates as substrates. The protein is DNA-directed RNA polymerase subunit beta' of Synechococcus elongatus (strain ATCC 33912 / PCC 7942 / FACHB-805) (Anacystis nidulans R2).